Here is a 271-residue protein sequence, read N- to C-terminus: Eukaryotic translation initiation factor 3 subunit G (271 aa).

Disordered regions lie at residues 1-26 (MSTT…TNPD), 63-119 (AQRK…AQKL), and 147-187 (TTSS…RDDS). Position 77 is a phosphoserine (Ser77). The RRM domain maps to 188 to 267 (TTLKVSQLNS…LILHLEWSKK (80 aa)).

It belongs to the eIF-3 subunit G family. Component of the eukaryotic translation initiation factor 3 (eIF-3) complex.

It localises to the cytoplasm. RNA-binding component of the eukaryotic translation initiation factor 3 (eIF-3) complex, which is involved in protein synthesis of a specialized repertoire of mRNAs and, together with other initiation factors, stimulates binding of mRNA and methionyl-tRNAi to the 40S ribosome. The eIF-3 complex specifically targets and initiates translation of a subset of mRNAs involved in cell proliferation. This subunit can bind 18S rRNA. This is Eukaryotic translation initiation factor 3 subunit G from Scheffersomyces stipitis (strain ATCC 58785 / CBS 6054 / NBRC 10063 / NRRL Y-11545) (Yeast).